Reading from the N-terminus, the 160-residue chain is SsrA-binding protein (160 aa).

Positions 134–160 (RKAHDKREAVKERDWNRDKARLMRDRG) are disordered. The segment covering 138-160 (DKREAVKERDWNRDKARLMRDRG) has biased composition (basic and acidic residues).

It belongs to the SmpB family.

The protein resides in the cytoplasm. In terms of biological role, required for rescue of stalled ribosomes mediated by trans-translation. Binds to transfer-messenger RNA (tmRNA), required for stable association of tmRNA with ribosomes. tmRNA and SmpB together mimic tRNA shape, replacing the anticodon stem-loop with SmpB. tmRNA is encoded by the ssrA gene; the 2 termini fold to resemble tRNA(Ala) and it encodes a 'tag peptide', a short internal open reading frame. During trans-translation Ala-aminoacylated tmRNA acts like a tRNA, entering the A-site of stalled ribosomes, displacing the stalled mRNA. The ribosome then switches to translate the ORF on the tmRNA; the nascent peptide is terminated with the 'tag peptide' encoded by the tmRNA and targeted for degradation. The ribosome is freed to recommence translation, which seems to be the essential function of trans-translation. The chain is SsrA-binding protein from Azorhizobium caulinodans (strain ATCC 43989 / DSM 5975 / JCM 20966 / LMG 6465 / NBRC 14845 / NCIMB 13405 / ORS 571).